Reading from the N-terminus, the 179-residue chain is Probable chorismate pyruvate-lyase (179 aa).

Residues Arg82, Leu120, and Glu165 each contribute to the substrate site.

Belongs to the UbiC family.

The protein resides in the cytoplasm. It catalyses the reaction chorismate = 4-hydroxybenzoate + pyruvate. It participates in cofactor biosynthesis; ubiquinone biosynthesis. Its function is as follows. Removes the pyruvyl group from chorismate, with concomitant aromatization of the ring, to provide 4-hydroxybenzoate (4HB) for the ubiquinone pathway. The sequence is that of Probable chorismate pyruvate-lyase from Vibrio cholerae serotype O1 (strain ATCC 39315 / El Tor Inaba N16961).